The sequence spans 305 residues: Putative S-adenosyl-L-methionine-dependent methyltransferase Mvan_1344 (305 aa).

Residues Asp130 and 159-160 (DL) each bind S-adenosyl-L-methionine.

Belongs to the UPF0677 family.

Exhibits S-adenosyl-L-methionine-dependent methyltransferase activity. In Mycolicibacterium vanbaalenii (strain DSM 7251 / JCM 13017 / BCRC 16820 / KCTC 9966 / NRRL B-24157 / PYR-1) (Mycobacterium vanbaalenii), this protein is Putative S-adenosyl-L-methionine-dependent methyltransferase Mvan_1344.